Reading from the N-terminus, the 139-residue chain is Small ribosomal subunit protein bS6 (139 aa).

Residues 120 to 139 (KGASKVETPTGPESTDIQEK) form a disordered region. A compositionally biased stretch (polar residues) spans 130–139 (GPESTDIQEK).

Belongs to the bacterial ribosomal protein bS6 family.

Its function is as follows. Binds together with bS18 to 16S ribosomal RNA. The chain is Small ribosomal subunit protein bS6 (rpsF) from Borreliella burgdorferi (strain ATCC 35210 / DSM 4680 / CIP 102532 / B31) (Borrelia burgdorferi).